A 475-amino-acid chain; its full sequence is Protein trichome birefringence-like 6 (475 aa).

The helical; Signal-anchor for type II membrane protein transmembrane segment at 14–34 (VLAFIITIISSAIVFFTFFSS) threads the bilayer. Residues 211–213 (GDS) carry the GDS motif motif. The short motif at 450 to 464 (DCSHWCLPGVPDTWN) is the DCXHWCLPGXXDXWN motif element.

The protein belongs to the PC-esterase family. TBL subfamily.

The protein resides in the membrane. In terms of biological role, may act as a bridging protein that binds pectin and other cell wall polysaccharides. Probably involved in maintaining esterification of pectins. May be involved in the specific O-acetylation of cell wall polymers. In Arabidopsis thaliana (Mouse-ear cress), this protein is Protein trichome birefringence-like 6 (TBL6).